Reading from the N-terminus, the 180-residue chain is tRNA (cytidine(56)-2'-O)-methyltransferase (180 aa).

S-adenosyl-L-methionine contacts are provided by residues L83, 115-119 (GAEKV), and 133-140 (VGNQPHSE).

The protein belongs to the aTrm56 family. In terms of assembly, homodimer.

It localises to the cytoplasm. The catalysed reaction is cytidine(56) in tRNA + S-adenosyl-L-methionine = 2'-O-methylcytidine(56) in tRNA + S-adenosyl-L-homocysteine + H(+). Functionally, specifically catalyzes the AdoMet-dependent 2'-O-ribose methylation of cytidine at position 56 in tRNAs. The protein is tRNA (cytidine(56)-2'-O)-methyltransferase of Methanococcus aeolicus (strain ATCC BAA-1280 / DSM 17508 / OCM 812 / Nankai-3).